A 977-amino-acid chain; its full sequence is Alanine--tRNA ligase (977 aa).

Residues 512-535 (SQVDSKLQSSTPAGTGSYDSKQVS) form a disordered region. H618, H622, C720, and H724 together coordinate Zn(2+).

It belongs to the class-II aminoacyl-tRNA synthetase family. Zn(2+) is required as a cofactor.

It localises to the cytoplasm. It catalyses the reaction tRNA(Ala) + L-alanine + ATP = L-alanyl-tRNA(Ala) + AMP + diphosphate. Catalyzes the attachment of alanine to tRNA(Ala) in a two-step reaction: alanine is first activated by ATP to form Ala-AMP and then transferred to the acceptor end of tRNA(Ala). Also edits incorrectly charged Ser-tRNA(Ala) and Gly-tRNA(Ala) via its editing domain. The sequence is that of Alanine--tRNA ligase from Leptospira interrogans serogroup Icterohaemorrhagiae serovar Lai (strain 56601).